The chain runs to 250 residues: DNA polymerase sliding clamp (250 aa).

This sequence belongs to the PCNA family. In terms of assembly, homotrimer. The subunits circularize to form a toroid; DNA passes through its center. Replication factor C (RFC) is required to load the toroid on the DNA.

Its function is as follows. Sliding clamp subunit that acts as a moving platform for DNA processing. Responsible for tethering the catalytic subunit of DNA polymerase and other proteins to DNA during high-speed replication. The polypeptide is DNA polymerase sliding clamp (Methanococcus maripaludis (strain C6 / ATCC BAA-1332)).